A 200-amino-acid polypeptide reads, in one-letter code: Thymidylate kinase (200 aa).

10 to 17 (GIDGAGKS) is an ATP binding site.

The protein belongs to the thymidylate kinase family.

The enzyme catalyses dTMP + ATP = dTDP + ADP. Phosphorylation of dTMP to form dTDP in both de novo and salvage pathways of dTTP synthesis. The chain is Thymidylate kinase from Cupriavidus metallidurans (strain ATCC 43123 / DSM 2839 / NBRC 102507 / CH34) (Ralstonia metallidurans).